The chain runs to 178 residues: Large ribosomal subunit protein uL6 (178 aa).

This sequence belongs to the universal ribosomal protein uL6 family. As to quaternary structure, part of the 50S ribosomal subunit.

This protein binds to the 23S rRNA, and is important in its secondary structure. It is located near the subunit interface in the base of the L7/L12 stalk, and near the tRNA binding site of the peptidyltransferase center. The sequence is that of Large ribosomal subunit protein uL6 from Corynebacterium kroppenstedtii (strain DSM 44385 / JCM 11950 / CIP 105744 / CCUG 35717).